A 130-amino-acid polypeptide reads, in one-letter code: Small ribosomal subunit protein uS11 (130 aa).

The protein belongs to the universal ribosomal protein uS11 family. In terms of assembly, part of the 30S ribosomal subunit. Interacts with proteins S7 and S18. Binds to IF-3.

In terms of biological role, located on the platform of the 30S subunit, it bridges several disparate RNA helices of the 16S rRNA. Forms part of the Shine-Dalgarno cleft in the 70S ribosome. The chain is Small ribosomal subunit protein uS11 from Prochlorococcus marinus (strain MIT 9211).